Consider the following 388-residue polypeptide: Protein YnjB (388 aa).

The interval 333–357 (AVWGDPSVLDPQKLPDGQRESLQSR) is disordered.

This is Protein YnjB (ynjB) from Escherichia coli (strain K12).